The sequence spans 228 residues: Ran-binding protein 1 homolog a (228 aa).

Residues 1-13 show a composition bias toward basic and acidic residues; sequence MATNEPEHEHRDE. Disordered regions lie at residues 1–30 and 159–228; these read MATN…QVAP and SEEE…GPST. A compositionally biased stretch (acidic residues) spans 14 to 24; the sequence is EEAGANEDEDT. The RanBD1 domain occupies 27-162; the sequence is QVAPIVRLEE…FKEVAESEEE (136 aa). Residues 179–228 show a composition bias toward basic and acidic residues; that stretch reads LTVEETKTEEKTEAKAVETAKTEVKAEEKKESEAEKSGEAKKTEESGPST.

Interacts with the GTP-bound form of RAN1, RAN2 and RAN3. As to expression, ubiquitous. Preferentially expressed in root tips and gynoecium.

Its subcellular location is the nucleus. It is found in the nuclear pore complex. The sequence is that of Ran-binding protein 1 homolog a (RANBP1A) from Arabidopsis thaliana (Mouse-ear cress).